The sequence spans 395 residues: Synaptotagmin-8 (395 aa).

Over 1 to 44 the chain is Extracellular; that stretch reads MQADRSMKMGHVSNPLSTSAPVDATAGPNLIPDLITKIPWPRWI. Residues 45–65 traverse the membrane as a helical; Signal-anchor for type III membrane protein segment; that stretch reads LFIAILAAGVLLVSCLLCVIC. Topologically, residues 66 to 395 are cytoplasmic; sequence YCCHRQRHRK…PRLPLLRPRS (330 aa). 2 consecutive C2 domains span residues 113-229 and 241-370; these read PWGQ…ESWY and QMGE…AQWH.

The protein belongs to the synaptotagmin family. As to quaternary structure, homodimer or homooligomer. Homodimerization and homooligomerization do not depend on Ca(2+). Interacts with SYNCRIP isoform 2 C-terminus. Binds inositol 1,3,4,5-tetrakisphosphate (IP4). Binds to AP2 in a Ca(2+)-independent manner. Interacts with STX1A, STX1B and STX2; the interaction is Ca(2+)-dependent. As to expression, ubiquitous. Strongly expressed in heart, kidney, cerebral cortex, pancreas, and many insulin-secreting cells; lower expression in spleen. Broadly distributed in kidney.

The protein resides in the cell membrane. It localises to the cytoplasmic vesicle. It is found in the secretory vesicle. Its subcellular location is the acrosome. Functionally, involved in the trafficking and exocytosis of secretory vesicles in non-neuronal tissues. Mediates Ca(2+)-regulation of exocytosis acrosomal reaction in sperm. May mediate Ca(2+)-regulation of exocytosis in insulin secreted cells. In Rattus norvegicus (Rat), this protein is Synaptotagmin-8 (Syt8).